A 180-amino-acid polypeptide reads, in one-letter code: N-terminal acetyltransferase B complex catalytic subunit naa20 (180 aa).

The N-acetyltransferase domain maps to 2–156; that stretch reads TDTRKFKATD…DSFDMRKPLS (155 aa).

The protein belongs to the acetyltransferase family. In terms of assembly, component of the N-terminal acetyltransferase B (NatB) complex.

The protein resides in the cytoplasm. Its subcellular location is the nucleus. The enzyme catalyses N-terminal L-methionyl-L-asparaginyl-[protein] + acetyl-CoA = N-terminal N(alpha)-acetyl-L-methionyl-L-asparaginyl-[protein] + CoA + H(+). It catalyses the reaction N-terminal L-methionyl-L-glutaminyl-[protein] + acetyl-CoA = N-terminal N(alpha)-acetyl-L-methionyl-L-glutaminyl-[protein] + CoA + H(+). It carries out the reaction N-terminal L-methionyl-L-aspartyl-[protein] + acetyl-CoA = N-terminal N(alpha)-acetyl-L-methionyl-L-aspartyl-[protein] + CoA + H(+). The catalysed reaction is N-terminal L-methionyl-L-glutamyl-[protein] + acetyl-CoA = N-terminal N(alpha)-acetyl-L-methionyl-L-glutamyl-[protein] + CoA + H(+). In terms of biological role, catalytic subunit of the NatB N-terminal acetyltransferase, which catalyzes acetylation of the amino-terminal methionine residues of all proteins beginning with Met-Asp or Met-Glu and of some proteins beginning with Met-Asn, Met-Gln or Met-Met. In Schizosaccharomyces pombe (strain 972 / ATCC 24843) (Fission yeast), this protein is N-terminal acetyltransferase B complex catalytic subunit naa20 (naa20).